Reading from the N-terminus, the 380-residue chain is GDP-mannose:cellobiosyl-diphosphopolyprenol alpha-mannosyltransferase (380 aa).

The protein belongs to the glycosyltransferase group 1 family. Glycosyltransferase 4 subfamily.

The enzyme catalyses beta-D-Glc-(1-&gt;4)-alpha-D-Glc-di-trans,octa-cis-undecaprenyl diphosphate + GDP-alpha-D-mannose = alpha-D-Man-(1-&gt;3)-beta-D-Glc-(1-&gt;4)-alpha-D-Glc-1-di-trans,octa-cis-undecaprenyl diphosphate + GDP + H(+). Involved in the biosynthesis of the exopolysaccharide xanthan, a polymer that is comprised of repeating pentasaccharide units with the structure of a beta-(1,4)-linked D-glucose backbone with trisaccharide side chains composed of mannose-beta-(1,4)-glucuronic acid-beta-(1,2)-mannose attached to alternate glucose residues in the backbone by alpha-(1,3) linkages. Xanthan is involved in pathogenicity but has also been used in a variety of applications as a specialty polymer for commercial applications, including food additives, where they act as viscosifying, stabilizing, emulsifying, or gelling agents. This chain is GDP-mannose:cellobiosyl-diphosphopolyprenol alpha-mannosyltransferase (gumH), found in Xanthomonas campestris.